A 396-amino-acid polypeptide reads, in one-letter code: 1-deoxy-D-xylulose 5-phosphate reductoisomerase (396 aa).

Positions 15, 16, 17, 18, 41, and 129 each coordinate NADPH. K130 is a binding site for 1-deoxy-D-xylulose 5-phosphate. E131 contributes to the NADPH binding site. Residue D155 coordinates Mn(2+). 4 residues coordinate 1-deoxy-D-xylulose 5-phosphate: S156, E157, S182, and H205. Position 157 (E157) interacts with Mn(2+). G211 is an NADPH binding site. S218, N223, K224, and E227 together coordinate 1-deoxy-D-xylulose 5-phosphate. E227 contacts Mn(2+).

This sequence belongs to the DXR family. Mg(2+) serves as cofactor. Requires Mn(2+) as cofactor.

It catalyses the reaction 2-C-methyl-D-erythritol 4-phosphate + NADP(+) = 1-deoxy-D-xylulose 5-phosphate + NADPH + H(+). It functions in the pathway isoprenoid biosynthesis; isopentenyl diphosphate biosynthesis via DXP pathway; isopentenyl diphosphate from 1-deoxy-D-xylulose 5-phosphate: step 1/6. Its function is as follows. Catalyzes the NADPH-dependent rearrangement and reduction of 1-deoxy-D-xylulose-5-phosphate (DXP) to 2-C-methyl-D-erythritol 4-phosphate (MEP). The chain is 1-deoxy-D-xylulose 5-phosphate reductoisomerase from Xanthomonas oryzae pv. oryzae (strain MAFF 311018).